Here is a 215-residue protein sequence, read N- to C-terminus: Beta-crystallin A3 (215 aa).

Met1 bears the N-acetylmethionine mark. The segment covering Met1–Thr16 has biased composition (low complexity). The interval Met1 to Gly29 is disordered. Residues Met1–Pro30 are N-terminal arm. Glu2 bears the N-acetylalanine mark. Beta/gamma crystallin 'Greek key' domains lie at Trp31 to Ser70 and Gly71 to Cys117. 2 positions are modified to S-glutathionyl cysteine; alternate: Cys82 and Cys117. S-methylcysteine; alternate is present on residues Cys82 and Cys117. The tract at residues Ser118–Glu123 is connecting peptide. 2 consecutive Beta/gamma crystallin 'Greek key' domains span residues Ser124–Ser165 and Gly166–Gln214. Residue Cys185 is modified to S-methylcysteine.

This sequence belongs to the beta/gamma-crystallin family. Homo/heterodimer, or complexes of higher-order. The structure of beta-crystallin oligomers seems to be stabilized through interactions between the N-terminal arms. Interacts with CRYBA1. Specific cleavages in the N-terminal arm occur during lens maturation and give rise to several truncated forms. Cleavages do not seem to have adverse effects on solubility. Post-translationally, S-methylation and glutathionylation occur in normal young lenses and do not seem to be detrimental.

Crystallins are the dominant structural components of the vertebrate eye lens. The sequence is that of Beta-crystallin A3 from Homo sapiens (Human).